A 186-amino-acid chain; its full sequence is Dynactin subunit 3 (186 aa).

An N-acetylalanine modification is found at Ala-2. The stretch at 46-66 (NIASKRERVKILYKKIEDLIK) forms a coiled coil.

It belongs to the dynactin subunit 3 family. As to quaternary structure, subunit of dynactin, a multiprotein complex part of a tripartite complex with dynein and a adapter, such as BICDL1, BICD2 or HOOK3. The dynactin complex is built around ACTR1A/ACTB filament and consists of an actin-related filament composed of a shoulder domain, a pointed end and a barbed end. Its length is defined by its flexible shoulder domain. The soulder is composed of 2 DCTN1 subunits, 4 DCTN2 and 2 DCTN3. The 4 DCNT2 (via N-terminus) bind the ACTR1A filament and act as molecular rulers to determine the length. The pointed end is important for binding dynein-dynactin cargo adapters. Consists of 4 subunits: ACTR10, DCNT4, DCTN5 and DCTN6. The barbed end is composed of a CAPZA1:CAPZB heterodimers, which binds ACTR1A/ACTB filament and dynactin and stabilizes dynactin.

The protein resides in the cytoplasm. The protein localises to the cytoskeleton. Its subcellular location is the microtubule organizing center. It localises to the centrosome. It is found in the chromosome. The protein resides in the centromere. The protein localises to the kinetochore. Its subcellular location is the spindle. It localises to the cleavage furrow. It is found in the midbody. In terms of biological role, part of the dynactin complex that activates the molecular motor dynein for ultra-processive transport along microtubules. Together with dynein may be involved in spindle assembly and cytokinesis. The sequence is that of Dynactin subunit 3 from Mus musculus (Mouse).